We begin with the raw amino-acid sequence, 185 residues long: Large ribosomal subunit protein bL25 (185 aa).

This sequence belongs to the bacterial ribosomal protein bL25 family. CTC subfamily. In terms of assembly, part of the 50S ribosomal subunit; part of the 5S rRNA/L5/L18/L25 subcomplex. Contacts the 5S rRNA. Binds to the 5S rRNA independently of L5 and L18.

Its function is as follows. This is one of the proteins that binds to the 5S RNA in the ribosome where it forms part of the central protuberance. In Chlamydia pneumoniae (Chlamydophila pneumoniae), this protein is Large ribosomal subunit protein bL25.